We begin with the raw amino-acid sequence, 489 residues long: Aspartate/glutamate permease AcaP (489 aa).

Helical transmembrane passes span 6–26, 36–56, 91–111, 122–142, 152–172, 195–215, 238–258, 290–310, 342–362, 373–393, 413–433, and 449–469; these read IRWF…GNVV, VVTS…LIVG, VVHI…FGWV, MSMT…LWLS, IGGL…VMAI, IPKF…AVGG, FLLA…MGMI, LMIV…AFSI, GYTL…LGIG, NLNS…FIML, AMIA…LGMV, and LASN…LPFI.

It belongs to the amino acid-polyamine-organocation (APC) superfamily. Glutamate:GABA antiporter (GGA) (TC 2.A.3.7) family.

It localises to the cell membrane. Its function is as follows. Involved in aspartate and glutamate uptake. Plays no significant role in the excretion of accumulated glutamate. The polypeptide is Aspartate/glutamate permease AcaP (Lactococcus lactis subsp. cremoris (strain MG1363)).